The following is a 320-amino-acid chain: Cytochrome f (320 aa).

The N-terminal stretch at 1–35 (MQNRNTFSWVKEQMTRSIFVSMMIYIITRASISNA) is a signal peptide. 4 residues coordinate heme: Tyr36, Cys56, Cys59, and His60. A helical membrane pass occupies residues 286-306 (IQGLFLFLASVILAQIFLVLK).

Belongs to the cytochrome f family. As to quaternary structure, the 4 large subunits of the cytochrome b6-f complex are cytochrome b6, subunit IV (17 kDa polypeptide, petD), cytochrome f and the Rieske protein, while the 4 small subunits are PetG, PetL, PetM and PetN. The complex functions as a dimer. The cofactor is heme.

It is found in the plastid. It localises to the chloroplast thylakoid membrane. In terms of biological role, component of the cytochrome b6-f complex, which mediates electron transfer between photosystem II (PSII) and photosystem I (PSI), cyclic electron flow around PSI, and state transitions. This chain is Cytochrome f, found in Amborella trichopoda.